Here is a 332-residue protein sequence, read N- to C-terminus: Nucleotide-binding protein RC1_2868 (332 aa).

The disordered stretch occupies residues 1–27 (MTGQPLTMETAAGADAGTGAATHPADG). The segment covering 10 to 22 (TAAGADAGTGAAT) has biased composition (low complexity). 36 to 43 (GMSGGGLS) contributes to the ATP binding site. 82 to 85 (DSRT) serves as a coordination point for GTP. Basic and acidic residues-rich tracts occupy residues 302–312 (GHRDLDRRHPA) and 322–332 (VASRETPEEHR). The disordered stretch occupies residues 302–332 (GHRDLDRRHPAPEPAPPWREVASRETPEEHR).

This sequence belongs to the RapZ-like family.

In terms of biological role, displays ATPase and GTPase activities. The protein is Nucleotide-binding protein RC1_2868 of Rhodospirillum centenum (strain ATCC 51521 / SW).